A 111-amino-acid polypeptide reads, in one-letter code: Ribonuclease P protein component (111 aa).

This sequence belongs to the RnpA family. In terms of assembly, consists of a catalytic RNA component (M1 or rnpB) and a protein subunit.

The catalysed reaction is Endonucleolytic cleavage of RNA, removing 5'-extranucleotides from tRNA precursor.. RNaseP catalyzes the removal of the 5'-leader sequence from pre-tRNA to produce the mature 5'-terminus. It can also cleave other RNA substrates such as 4.5S RNA. The protein component plays an auxiliary but essential role in vivo by binding to the 5'-leader sequence and broadening the substrate specificity of the ribozyme. This Clostridium botulinum (strain 657 / Type Ba4) protein is Ribonuclease P protein component.